A 380-amino-acid polypeptide reads, in one-letter code: Cytochrome b (380 aa).

4 helical membrane-spanning segments follow: residues 33 to 53, 77 to 98, 113 to 133, and 178 to 198; these read FGSLLGLCLITQIATGLFLAM, WLIRNLHANGASFFFICIYLHI, WNVGVILLLLVMMTAFVGYVL, and FFAFHFLLPFIIAAATVIHLL. Residues His-83 and His-97 each contribute to the heme b site. Positions 182 and 196 each coordinate heme b. His-201 is an a ubiquinone binding site. 4 helical membrane-spanning segments follow: residues 226–246, 288–308, 320–340, and 347–367; these read YKDLLGFAALLIALTSLALFS, LGGVLALLFSILVLMLVPILH, ITQFLFWTLVADVIILTWIGG, and FIIIGQIASFLYFFLFLVLTP.

This sequence belongs to the cytochrome b family. As to quaternary structure, the cytochrome bc1 complex contains 3 respiratory subunits (MT-CYB, CYC1 and UQCRFS1), 2 core proteins (UQCRC1 and UQCRC2) and probably 6 low-molecular weight proteins. The cofactor is heme b.

The protein localises to the mitochondrion inner membrane. Its function is as follows. Component of the ubiquinol-cytochrome c reductase complex (complex III or cytochrome b-c1 complex) that is part of the mitochondrial respiratory chain. The b-c1 complex mediates electron transfer from ubiquinol to cytochrome c. Contributes to the generation of a proton gradient across the mitochondrial membrane that is then used for ATP synthesis. This chain is Cytochrome b (mt-cyb), found in Dactyloptena peterseni (Starry flying gurnard).